We begin with the raw amino-acid sequence, 116 residues long: Large ribosomal subunit protein uL18 (116 aa).

It belongs to the universal ribosomal protein uL18 family. In terms of assembly, part of the 50S ribosomal subunit; part of the 5S rRNA/L5/L18/L25 subcomplex. Contacts the 5S and 23S rRNAs.

This is one of the proteins that bind and probably mediate the attachment of the 5S RNA into the large ribosomal subunit, where it forms part of the central protuberance. The chain is Large ribosomal subunit protein uL18 from Azotobacter vinelandii (strain DJ / ATCC BAA-1303).